A 361-amino-acid polypeptide reads, in one-letter code: Anthranilate phosphoribosyltransferase (361 aa).

Residues glycine 101, 104–105, threonine 109, 111–114, 129–137, and serine 141 each bind 5-phospho-alpha-D-ribose 1-diphosphate; these read GD, NIST, and KHGNRGVSS. Glycine 101 contacts anthranilate. Serine 113 contacts Mg(2+). Asparagine 132 lines the anthranilate pocket. Arginine 187 provides a ligand contact to anthranilate. Mg(2+) contacts are provided by aspartate 245 and glutamate 246.

Belongs to the anthranilate phosphoribosyltransferase family. As to quaternary structure, homodimer. The cofactor is Mg(2+).

The catalysed reaction is N-(5-phospho-beta-D-ribosyl)anthranilate + diphosphate = 5-phospho-alpha-D-ribose 1-diphosphate + anthranilate. The protein operates within amino-acid biosynthesis; L-tryptophan biosynthesis; L-tryptophan from chorismate: step 2/5. Catalyzes the transfer of the phosphoribosyl group of 5-phosphorylribose-1-pyrophosphate (PRPP) to anthranilate to yield N-(5'-phosphoribosyl)-anthranilate (PRA). The protein is Anthranilate phosphoribosyltransferase of Shewanella denitrificans (strain OS217 / ATCC BAA-1090 / DSM 15013).